Here is a 660-residue protein sequence, read N- to C-terminus: Pro-secreted protein ORF2 (660 aa).

The signal sequence occupies residues 1 to 23 (MRPRAVLLLLFVLLPMLPAPPAG). Disordered regions lie at residues 19 to 43 (APPAGQPSGRRRGRRNGGAGGGFWG) and 64 to 125 (ADVV…VPDV). The short motif at 28–33 (RRRGRR) is the Nuclear localization signal element. A compositionally biased stretch (low complexity) spans 93 to 124 (RPSTAPRRRSAPAGAAPLTAVSPAPDTAPVPD). 2 N-linked (GlcNAc...) asparagine; by host glycosylation sites follow: asparagine 137 and asparagine 310. The segment at 368-394 (IALTLFNLADTLLGGLPTELISSAGGQ) is particle formation. Asparagine 562 carries N-linked (GlcNAc...) asparagine; by host glycosylation. The tract at residues 585-610 (TTSLGAGPTSISAVGVLAPHSALAVL) is oligomerization.

This sequence belongs to the hepevirus capsid protein family. In terms of assembly, homodimer. Self-assembles to form the capsid. The capsid is dominated by dimers that define the 30 morphological units. Interacts with phosphorylated protein ORF3. Interacts with host TMEM134. Interacts with host ASGR1 and ASGR2; these interactions facilitate infection of host hepatocytes. Post-translationally, cleaved by host protease in the N-terminus. In terms of processing, N-glycosylated. Not N-glycosylated. The C-terminus of the capsid protein ORF2 is truncated in non-enveloped virions shedded in feces, probably due to host proteases.

The protein resides in the secreted. It localises to the virion. Its subcellular location is the host cytoplasm. It is found in the host endoplasmic reticulum. The protein localises to the host Golgi apparatus. The protein resides in the host cell surface. It localises to the host nucleus. Functionally, plays a role in the inhibition of host antibody-mediated neutralization without blocking viral cell entry. Forms an icosahedral capsid with a T=1 symmetry and a 34 nm diameter. The capsid is composed of 60 copies linked to each other. Binds to the 5' end of the genomic RNA to mediate genome encapsidation. Binds to heparin surface proteoglycans (HSPGs) to mediate viral entry. Additionally, the interactions with host ASGR1 and ASGR2 facilitate viral infection of hepatocytes. Inhibits IFN production by blocking host TBK1-induced IRF3 phosphorylation. The nuclear form probably modulates host gene expression. This is Pro-secreted protein ORF2 from Hepatitis E virus genotype 3 (isolate Swine/United States/swUS1) (HEV-3).